The primary structure comprises 275 residues: Testis-specific gene 13 protein (275 aa).

Positions 1–20 (MSQKRQTKFQNGKSKTSENS) are enriched in polar residues. The disordered stretch occupies residues 1–28 (MSQKRQTKFQNGKSKTSENSSAKREKGM).

Testis-specific.

This chain is Testis-specific gene 13 protein (TSGA13), found in Homo sapiens (Human).